The sequence spans 333 residues: Homeobox protein Nkx-3.2 (333 aa).

2 disordered regions span residues 74-121 and 137-212; these read PART…RARV and DLEE…SRAA. Over residues 137 to 148 the composition is skewed to basic and acidic residues; it reads DLEEEAPVRSDS. Over residues 179–191 the composition is skewed to gly residues; sequence GAAGSGASGGQAG. Positions 206–265 form a DNA-binding region, homeobox; that stretch reads KKRSRAAFSHAQVFELERRFNHQRYLSGPERADLAASLKLTETQVKIWFQNRRYKTKRRQ.

Belongs to the NK-3 homeobox family. As to expression, expressed widely in mesoderm at the gastroduodenal junction (at protein level). Expressed in visceral mesoderm and embryonic skeleton. Expression is restricted to immature proliferative chondrocytes during endochondral ossification.

Its subcellular location is the nucleus. Its function is as follows. Transcriptional repressor that acts as a negative regulator of chondrocyte maturation. PLays a role in distal stomach development; required for proper antral-pyloric morphogenesis and development of antral-type epithelium. In concert with GSC, defines the structural components of the middle ear; required for tympanic ring and gonium development and in the regulation of the width of the malleus. This chain is Homeobox protein Nkx-3.2 (Nkx3-2), found in Mus musculus (Mouse).